A 323-amino-acid polypeptide reads, in one-letter code: D-specific alpha-keto acid dehydrogenase (323 aa).

Residues 157 to 158, 230 to 232, and aspartate 256 contribute to the NAD(+) site; these read HI and TGR. Arginine 232 is an active-site residue. Glutamate 261 is an active-site residue. Catalysis depends on histidine 293, which acts as the Proton donor. 293–296 provides a ligand contact to NAD(+); the sequence is HTAY.

This sequence belongs to the D-isomer specific 2-hydroxyacid dehydrogenase family.

Functionally, required for high-level resistance to glycopeptides antibiotics. Catalyzes the reduction of 2-keto acids to 2-D-hydroxy acids that give rise to peptidoglycan precursors that terminate in the depsipeptide D-alanine-2-lactate rather than the dipeptide D-alanine-D-alanine thus preventing vancomycin binding. The protein is D-specific alpha-keto acid dehydrogenase (vanHB) of Enterococcus faecalis (strain ATCC 700802 / V583).